Consider the following 551-residue polypeptide: RanBD1 domain-containing protein C584.03c (551 aa).

Residues 1 to 309 enclose the RanBD1 domain; that stretch reads MDELLNVASH…LLLKYADDET (309 aa). Ser-441 is modified (phosphoserine). The tract at residues 522–551 is disordered; the sequence is SVIPHSEPESSSKVINCQAKLNVEKEKKNP.

It localises to the nucleus. The chain is RanBD1 domain-containing protein C584.03c from Schizosaccharomyces pombe (strain 972 / ATCC 24843) (Fission yeast).